A 269-amino-acid chain; its full sequence is Hemin import ATP-binding protein HmuV (269 aa).

The region spanning 5–242 is the ABC transporter domain; sequence LDAEAASFAI…SLIRRVFDIA (238 aa). 37 to 44 lines the ATP pocket; sequence GPNGAGKS.

The protein belongs to the ABC transporter superfamily. Heme (hemin) importer (TC 3.A.1.14.5) family. The complex is composed of two ATP-binding proteins (HmuV), two transmembrane proteins (HmuU) and a solute-binding protein (HmuT).

It is found in the cell inner membrane. Functionally, part of the ABC transporter complex HmuTUV involved in hemin import. Responsible for energy coupling to the transport system. The polypeptide is Hemin import ATP-binding protein HmuV (Rhodopseudomonas palustris (strain BisB18)).